A 159-amino-acid chain; its full sequence is Flagellar assembly factor FliW (159 aa).

This sequence belongs to the FliW family. In terms of assembly, interacts with translational regulator CsrA and flagellin(s).

The protein resides in the cytoplasm. Functionally, acts as an anti-CsrA protein, binds CsrA and prevents it from repressing translation of its target genes, one of which is flagellin. Binds to flagellin and participates in the assembly of the flagellum. The polypeptide is Flagellar assembly factor FliW (Geobacter sulfurreducens (strain ATCC 51573 / DSM 12127 / PCA)).